A 434-amino-acid polypeptide reads, in one-letter code: Probable carboxypeptidase BDBG_01803 (434 aa).

The signal sequence occupies residues 1–20; the sequence is MKLSHLAAALSAQLVAPVAA. Asparagine 35, asparagine 136, and asparagine 150 each carry an N-linked (GlcNAc...) asparagine glycan. Aspartate 160 lines the Zn(2+) pocket. Glutamate 192 serves as the catalytic Proton acceptor. Zn(2+) is bound at residue glutamate 193. Asparagine 343 carries N-linked (GlcNAc...) asparagine glycosylation.

The protein belongs to the peptidase M20A family. It depends on Zn(2+) as a cofactor.

Its subcellular location is the secreted. This is Probable carboxypeptidase BDBG_01803 from Blastomyces gilchristii (strain SLH14081) (Blastomyces dermatitidis).